The primary structure comprises 406 residues: 2,3-diketo-5-methylthiopentyl-1-phosphate enolase (406 aa).

Lys-94 acts as the Proton acceptor in catalysis. Substrate contacts are provided by residues Lys-143, 169–172 (KDDE), His-260, Gly-332, and 354–355 (GG). Residues Lys-169, Asp-171, and Glu-172 each coordinate Mg(2+). Lys-169 is subject to N6-carboxylysine.

It belongs to the RuBisCO large chain family. Type IV subfamily. In terms of assembly, homodimer. Mg(2+) serves as cofactor.

It catalyses the reaction 5-methylsulfanyl-2,3-dioxopentyl phosphate = 2-hydroxy-5-methylsulfanyl-3-oxopent-1-enyl phosphate. It participates in amino-acid biosynthesis; L-methionine biosynthesis via salvage pathway; L-methionine from S-methyl-5-thio-alpha-D-ribose 1-phosphate: step 3/6. In terms of biological role, catalyzes the enolization of 2,3-diketo-5-methylthiopentyl-1-phosphate (DK-MTP-1-P) into 2-hydroxy-3-keto-5-methylthiopentenyl-1-phosphate (HK-MTPenyl-1-P). This chain is 2,3-diketo-5-methylthiopentyl-1-phosphate enolase, found in Bacillus pumilus (strain SAFR-032).